We begin with the raw amino-acid sequence, 500 residues long: Na(+)/H(+) antiporter NhaB (500 aa).

12 consecutive transmembrane segments (helical) span residues 28–50, 58–78, 96–116, 129–149, 150–170, 205–225, 241–261, 311–331, 350–370, 394–414, 449–469, and 477–497; these read FLML…LLVI, MALK…ALLL, VILL…LLLF, ALLA…LDAL, TVTA…HRVA, LLMH…VGEP, FFLK…VTCL, ILIA…LMVI, FKDA…VAVI, MLFI…VATI, VATP…IAPL, and MVWM…YAVS.

The protein belongs to the NhaB Na(+)/H(+) (TC 2.A.34) antiporter family.

The protein resides in the cell inner membrane. It carries out the reaction 2 Na(+)(in) + 3 H(+)(out) = 2 Na(+)(out) + 3 H(+)(in). Its function is as follows. Na(+)/H(+) antiporter that extrudes sodium in exchange for external protons. In Pseudomonas fluorescens (strain Pf0-1), this protein is Na(+)/H(+) antiporter NhaB.